The primary structure comprises 253 residues: Demethylmenaquinone methyltransferase (253 aa).

S-adenosyl-L-methionine-binding positions include Thr75, Asp96, and Asp124 to Ala125.

Belongs to the class I-like SAM-binding methyltransferase superfamily. MenG/UbiE family.

It catalyses the reaction a 2-demethylmenaquinol + S-adenosyl-L-methionine = a menaquinol + S-adenosyl-L-homocysteine + H(+). It participates in quinol/quinone metabolism; menaquinone biosynthesis; menaquinol from 1,4-dihydroxy-2-naphthoate: step 2/2. Its function is as follows. Methyltransferase required for the conversion of demethylmenaquinol (DMKH2) to menaquinol (MKH2). This Desulfitobacterium hafniense (strain Y51) protein is Demethylmenaquinone methyltransferase.